Consider the following 278-residue polypeptide: Dehydrogenase/reductase SDR family member 4 (278 aa).

Residue 36 to 60 (LVTASTDGIGFAIARRLAQDGAHVV) coordinates NADP(+). N6-acetyllysine; alternate is present on K92. N6-succinyllysine; alternate is present on K92. K105 is modified (N6-acetyllysine). S169 is a binding site for substrate. Residue Y182 is the Proton acceptor of the active site. K186 lines the NADP(+) pocket. The residue at position 216 (K216) is an N6-acetyllysine; alternate. K216 is subject to N6-succinyllysine; alternate. S220 is subject to Phosphoserine. N6-succinyllysine occurs at positions 227 and 234. Positions 276-278 (SRL) match the Peroxisomal targeting signal motif.

This sequence belongs to the short-chain dehydrogenases/reductases (SDR) family. As to quaternary structure, homotetramer.

It localises to the peroxisome. It carries out the reaction a secondary alcohol + NADP(+) = a ketone + NADPH + H(+). The enzyme catalyses 3beta-hydroxy-5beta-pregnane-20-one + NADP(+) = 5beta-pregnan-3,20-dione + NADPH + H(+). It catalyses the reaction 5beta-dihydrotestosterone + NADPH + H(+) = 5beta-androstane-3beta,17beta-diol + NADP(+). The catalysed reaction is 5beta-androstane-3,17-dione + NADPH + H(+) = 3beta-hydroxy-5beta-androstane-17-one + NADP(+). It carries out the reaction isatin + NADPH + H(+) = 3-hydroxyindolin-2-one + NADP(+). The enzyme catalyses lithocholate + NADP(+) = 3-oxo-5beta-cholan-24-oate + NADPH + H(+). It catalyses the reaction 3-oxo-5beta-cholan-24-oate + NADPH + H(+) = isolithocholate + NADP(+). Functionally, NADPH-dependent oxidoreductase which catalyzes the reduction of a variety of compounds bearing carbonyl groups including ketosteroids, alpha-dicarbonyl compounds, aldehydes, aromatic ketones and quinones. Reduces 3-ketosteroids and benzil into 3beta-hydroxysteroids and R-benzoin, respectively, in contrast to the stereoselectivity of non-primate DHRS4s which produce 3alpha-hydroxysteroids and S-benzoin. Diplays low activity toward all-trans-retinal and no activity toward 9-cis-retinal as compared to non-primate mammals. In the reverse reaction, catalyze the NAD-dependent oxidation of 3beta-hydroxysteroids and alcohol, but with much lower efficiency. Involved in the metabolism of 3beta-hydroxysteroids, isatin and xenobiotic carbonyl compounds. This chain is Dehydrogenase/reductase SDR family member 4 (DHRS4), found in Pongo abelii (Sumatran orangutan).